A 92-amino-acid polypeptide reads, in one-letter code: uncharacterized protein (92 aa).

2 helical membrane-spanning segments follow: residues Gly34–Gly54 and Leu65–Val85.

The protein localises to the cell membrane. This is an uncharacterized protein from Bacillus anthracis.